Here is a 205-residue protein sequence, read N- to C-terminus: Methylthioribulose-1-phosphate dehydratase (205 aa).

Cys75 contributes to the substrate binding site. Residues His93 and His95 each coordinate Zn(2+). Glu116 serves as the catalytic Proton donor/acceptor. His171 contributes to the Zn(2+) binding site.

Belongs to the aldolase class II family. MtnB subfamily. Zn(2+) is required as a cofactor.

Its subcellular location is the cytoplasm. The enzyme catalyses 5-(methylsulfanyl)-D-ribulose 1-phosphate = 5-methylsulfanyl-2,3-dioxopentyl phosphate + H2O. It functions in the pathway amino-acid biosynthesis; L-methionine biosynthesis via salvage pathway; L-methionine from S-methyl-5-thio-alpha-D-ribose 1-phosphate: step 2/6. In terms of biological role, catalyzes the dehydration of methylthioribulose-1-phosphate (MTRu-1-P) into 2,3-diketo-5-methylthiopentyl-1-phosphate (DK-MTP-1-P). The chain is Methylthioribulose-1-phosphate dehydratase from Kluyveromyces lactis (strain ATCC 8585 / CBS 2359 / DSM 70799 / NBRC 1267 / NRRL Y-1140 / WM37) (Yeast).